The chain runs to 195 residues: Guanylate kinase (195 aa).

In terms of domain architecture, Guanylate kinase-like spans 7–186; it reads GVLLVLSSPS…SVEEISSILD (180 aa). Residue 14-21 participates in ATP binding; that stretch reads SPSGAGKT.

The protein belongs to the guanylate kinase family.

The protein resides in the cytoplasm. It catalyses the reaction GMP + ATP = GDP + ADP. Its function is as follows. Essential for recycling GMP and indirectly, cGMP. This Wolbachia sp. subsp. Brugia malayi (strain TRS) protein is Guanylate kinase.